The primary structure comprises 276 residues: MSELCMSTPISVIVVGALGKMGREVVKAVHQAPDTALYAAVDRKQVGEDIGEALGLGTLEIPISGSLQEVCVAAAQEKQPVVMVDFTHPQAVYENVRMAIAYGVYPVVGTTGLSPEQIEELAEFADKADMGAVIAPNFSIGMVLLQEAAIRASQYFDHVEIIELHHNQKADAPSGTALQTAQRLAELGKTFNPPQVQESEHLRGARGAFAAAEIRIHSVRLPGLIAHQEVIFGAPGQIYTLRHDTSDRQCYMPGVLLAIRKVRQLKRLIYGLEKLL.

Position 16–21 (16–21 (GALGKM)) interacts with NAD(+). Residue lysine 44 participates in NADP(+) binding. NAD(+) contacts are provided by residues 109 to 111 (GTT) and 135 to 138 (APNF). Histidine 165 functions as the Proton donor/acceptor in the catalytic mechanism. Residue histidine 166 coordinates (S)-2,3,4,5-tetrahydrodipicolinate. Lysine 169 acts as the Proton donor in catalysis. 175-176 (GT) is a (S)-2,3,4,5-tetrahydrodipicolinate binding site.

Belongs to the DapB family.

It localises to the cytoplasm. It catalyses the reaction (S)-2,3,4,5-tetrahydrodipicolinate + NAD(+) + H2O = (2S,4S)-4-hydroxy-2,3,4,5-tetrahydrodipicolinate + NADH + H(+). The catalysed reaction is (S)-2,3,4,5-tetrahydrodipicolinate + NADP(+) + H2O = (2S,4S)-4-hydroxy-2,3,4,5-tetrahydrodipicolinate + NADPH + H(+). It participates in amino-acid biosynthesis; L-lysine biosynthesis via DAP pathway; (S)-tetrahydrodipicolinate from L-aspartate: step 4/4. Functionally, catalyzes the conversion of 4-hydroxy-tetrahydrodipicolinate (HTPA) to tetrahydrodipicolinate. The sequence is that of 4-hydroxy-tetrahydrodipicolinate reductase from Thermosynechococcus vestitus (strain NIES-2133 / IAM M-273 / BP-1).